The primary structure comprises 266 residues: 3-methyl-2-oxobutanoate hydroxymethyltransferase (266 aa).

Mg(2+) is bound by residues D45 and D84. 3-methyl-2-oxobutanoate contacts are provided by residues 45–46, D84, and K113; that span reads DS. E115 provides a ligand contact to Mg(2+). E183 (proton acceptor) is an active-site residue.

It belongs to the PanB family. As to quaternary structure, homodecamer; pentamer of dimers. Mg(2+) is required as a cofactor.

It localises to the cytoplasm. It catalyses the reaction 3-methyl-2-oxobutanoate + (6R)-5,10-methylene-5,6,7,8-tetrahydrofolate + H2O = 2-dehydropantoate + (6S)-5,6,7,8-tetrahydrofolate. Its pathway is cofactor biosynthesis; (R)-pantothenate biosynthesis; (R)-pantoate from 3-methyl-2-oxobutanoate: step 1/2. Functionally, catalyzes the reversible reaction in which hydroxymethyl group from 5,10-methylenetetrahydrofolate is transferred onto alpha-ketoisovalerate to form ketopantoate. The sequence is that of 3-methyl-2-oxobutanoate hydroxymethyltransferase from Coxiella burnetii (strain CbuG_Q212) (Coxiella burnetii (strain Q212)).